Reading from the N-terminus, the 736-residue chain is Phosphoribosylformylglycinamidine synthase subunit PurL (736 aa).

The active site involves histidine 48. ATP contacts are provided by tyrosine 51 and lysine 90. A Mg(2+)-binding site is contributed by glutamate 92. Residues 93-96 and arginine 115 contribute to the substrate site; that span reads SHNH. Histidine 94 serves as the catalytic Proton acceptor. Residue aspartate 116 coordinates Mg(2+). Residue glutamine 239 coordinates substrate. Position 267 (aspartate 267) interacts with Mg(2+). Residue 311-313 participates in substrate binding; that stretch reads ESQ. Residues aspartate 492 and glycine 529 each coordinate ATP. Asparagine 530 is a binding site for Mg(2+). Serine 532 serves as a coordination point for substrate.

The protein belongs to the FGAMS family. As to quaternary structure, monomer. Part of the FGAM synthase complex composed of 1 PurL, 1 PurQ and 2 PurS subunits.

It is found in the cytoplasm. It carries out the reaction N(2)-formyl-N(1)-(5-phospho-beta-D-ribosyl)glycinamide + L-glutamine + ATP + H2O = 2-formamido-N(1)-(5-O-phospho-beta-D-ribosyl)acetamidine + L-glutamate + ADP + phosphate + H(+). It functions in the pathway purine metabolism; IMP biosynthesis via de novo pathway; 5-amino-1-(5-phospho-D-ribosyl)imidazole from N(2)-formyl-N(1)-(5-phospho-D-ribosyl)glycinamide: step 1/2. Part of the phosphoribosylformylglycinamidine synthase complex involved in the purines biosynthetic pathway. Catalyzes the ATP-dependent conversion of formylglycinamide ribonucleotide (FGAR) and glutamine to yield formylglycinamidine ribonucleotide (FGAM) and glutamate. The FGAM synthase complex is composed of three subunits. PurQ produces an ammonia molecule by converting glutamine to glutamate. PurL transfers the ammonia molecule to FGAR to form FGAM in an ATP-dependent manner. PurS interacts with PurQ and PurL and is thought to assist in the transfer of the ammonia molecule from PurQ to PurL. This is Phosphoribosylformylglycinamidine synthase subunit PurL from Bradyrhizobium diazoefficiens (strain JCM 10833 / BCRC 13528 / IAM 13628 / NBRC 14792 / USDA 110).